The following is a 120-amino-acid chain: uncharacterized protein (120 aa).

The protein localises to the mitochondrion. This is an uncharacterized protein from Arabidopsis thaliana (Mouse-ear cress).